The following is a 559-amino-acid chain: 2,3-bisphosphoglycerate-independent phosphoglycerate mutase (559 aa).

D28 and S81 together coordinate Mn(2+). The active-site Phosphoserine intermediate is the S81. Substrate-binding positions include H140, 170–171 (RD), R206, R213, 286–289 (RADR), and K361. Mn(2+) contacts are provided by D430, H434, D471, H472, and H501.

It belongs to the BPG-independent phosphoglycerate mutase family. As to quaternary structure, monomer. Mn(2+) is required as a cofactor. Post-translationally, the N-terminus is blocked. Found ubiquitously in germinating seed.

The protein resides in the cytoplasm. It carries out the reaction (2R)-2-phosphoglycerate = (2R)-3-phosphoglycerate. It participates in carbohydrate degradation; glycolysis; pyruvate from D-glyceraldehyde 3-phosphate: step 3/5. Its function is as follows. Catalyzes the interconversion of 2-phosphoglycerate and 3-phosphoglycerate. This Zea mays (Maize) protein is 2,3-bisphosphoglycerate-independent phosphoglycerate mutase.